A 664-amino-acid polypeptide reads, in one-letter code: Translation factor GUF1, mitochondrial (664 aa).

The 184-residue stretch at 63 to 246 (SNYRNFSIVA…SIINNIPPPQ (184 aa)) folds into the tr-type G domain. GTP-binding positions include 72–79 (AHVDHGKS), 139–143 (DTPGH), and 193–196 (NKID).

This sequence belongs to the TRAFAC class translation factor GTPase superfamily. Classic translation factor GTPase family. LepA subfamily.

Its subcellular location is the mitochondrion inner membrane. The catalysed reaction is GTP + H2O = GDP + phosphate + H(+). Functionally, promotes mitochondrial protein synthesis. May act as a fidelity factor of the translation reaction, by catalyzing a one-codon backward translocation of tRNAs on improperly translocated ribosomes. Binds to mitochondrial ribosomes in a GTP-dependent manner. The polypeptide is Translation factor GUF1, mitochondrial (Clavispora lusitaniae (strain ATCC 42720) (Yeast)).